A 340-amino-acid chain; its full sequence is Latency-related protein 1 (340 aa).

Disordered regions lie at residues 13–96 (AALW…PNRQ) and 254–340 (RLPG…PPRP). Repeat copies occupy residues 27–43 (PTPTHPHSHAPPLPRTP) and 59–75 (PTPTHPHSHAPPLPRTP). The tract at residues 27-75 (PTPTHPHSHAPPLPRTPTPSHPHSRAPPLPRAPTPTHPHSHAPPLPRTP) is 2 X 17 AA repeats. Pro residues predominate over residues 35–73 (HAPPLPRTPTPSHPHSRAPPLPRAPTPTHPHSHAPPLPR). The span at 287-307 (ARGGGSGGGRGPGGGRGGPRG) shows a compositional bias: gly residues. The segment covering 308–326 (SRGRGGRGRGGRGGGRRGR) has biased composition (basic residues).

This is Latency-related protein 1 from Human herpesvirus 1 (strain F) (HHV-1).